The sequence spans 151 residues: 3-dehydroquinate dehydratase (151 aa).

Tyr-24 functions as the Proton acceptor in the catalytic mechanism. Residues Asn-76, His-82, and Asp-89 each contribute to the substrate site. Residue His-102 is the Proton donor of the active site. Substrate contacts are provided by residues 103–104 and Arg-113; that span reads VS.

The protein belongs to the type-II 3-dehydroquinase family. In terms of assembly, homododecamer.

It catalyses the reaction 3-dehydroquinate = 3-dehydroshikimate + H2O. It participates in metabolic intermediate biosynthesis; chorismate biosynthesis; chorismate from D-erythrose 4-phosphate and phosphoenolpyruvate: step 3/7. Functionally, catalyzes a trans-dehydration via an enolate intermediate. The polypeptide is 3-dehydroquinate dehydratase (Rhodopseudomonas palustris (strain ATCC BAA-98 / CGA009)).